The chain runs to 373 residues: MEFKLKHKDGMARVCEITTAHSTFLTPVFMPVGTVGAVKSLDANDMKNELDAKIILANTYHMYLRPTSKVVKDFGGLHGFTKFDRSFLTDSGGFQAFSLSKNSKHFNEGIEFKSHIDGSHHLFTPKSVLDTQYDFNSDIMMILDDLVALPATKERVKISVDRTILWAKEAITYHKSMQNKGIGIGQNIFGIIQGGTDYEERKRCALSLNEMPFDGLAIGGLSVGEENALMYETVQNLNPYLDENRPRYLMGVGTPEDLVENVERGVDMFDCVMPTRNARNGTFFTSFGKFNIKKAEFINDHEAIDPACSCYTCRNFSRGYLNHLFKAKELTFFRLASLHNLHYYLELARKMREAILNNSFTQFKRNFYHLRGK.

Residue aspartate 90 is the Proton acceptor of the active site. Residues 90–94, aspartate 144, glutamine 193, and glycine 220 contribute to the substrate site; that span reads DSGGF. Positions 251–257 are RNA binding; it reads GVGTPED. Aspartate 270 acts as the Nucleophile in catalysis. Positions 275–279 are RNA binding; important for wobble base 34 recognition; sequence TRNAR. Zn(2+) contacts are provided by cysteine 308, cysteine 310, cysteine 313, and histidine 339.

The protein belongs to the queuine tRNA-ribosyltransferase family. Homodimer. Within each dimer, one monomer is responsible for RNA recognition and catalysis, while the other monomer binds to the replacement base PreQ1. The cofactor is Zn(2+).

The catalysed reaction is 7-aminomethyl-7-carbaguanine + guanosine(34) in tRNA = 7-aminomethyl-7-carbaguanosine(34) in tRNA + guanine. It functions in the pathway tRNA modification; tRNA-queuosine biosynthesis. Functionally, catalyzes the base-exchange of a guanine (G) residue with the queuine precursor 7-aminomethyl-7-deazaguanine (PreQ1) at position 34 (anticodon wobble position) in tRNAs with GU(N) anticodons (tRNA-Asp, -Asn, -His and -Tyr). Catalysis occurs through a double-displacement mechanism. The nucleophile active site attacks the C1' of nucleotide 34 to detach the guanine base from the RNA, forming a covalent enzyme-RNA intermediate. The proton acceptor active site deprotonates the incoming PreQ1, allowing a nucleophilic attack on the C1' of the ribose to form the product. After dissociation, two additional enzymatic reactions on the tRNA convert PreQ1 to queuine (Q), resulting in the hypermodified nucleoside queuosine (7-(((4,5-cis-dihydroxy-2-cyclopenten-1-yl)amino)methyl)-7-deazaguanosine). This chain is Queuine tRNA-ribosyltransferase, found in Campylobacter jejuni subsp. jejuni serotype O:23/36 (strain 81-176).